We begin with the raw amino-acid sequence, 543 residues long: Protein B602L (543 aa).

13 consecutive repeat copies span residues 161-164 (CAST), 165-168 (CAST), 169-172 (CAST), 173-176 (CAST), 177-180 (CADT), 181-184 (NVDT), 185-188 (CTDT), 189-192 (CAST), 193-196 (CADT), 197-200 (NVDT), 201-204 (CAST), 205-208 (CADT), and 209-212 (CAST). Residues 161–212 (CASTCASTCASTCASTCADTNVDTCTDTCASTCADTNVDTCASTCADTCAST) are 13 X 4 AA tandem repeats of [CN]-[ATV]-[DS]-T.

The protein belongs to the asfivirus B602L family.

Its subcellular location is the host cytoplasm. Functionally, plays an essential role in the assembly of the icosahedral capsid of the virus. Allows the assembly of 3 molecules of hexon protein p72 and formation of a thermostable trimer. In African swine fever virus (isolate Pig/Kenya/KEN-50/1950) (ASFV), this protein is Protein B602L.